We begin with the raw amino-acid sequence, 655 residues long: Protein npp-24 (655 aa).

Residues 263 to 283 traverse the membrane as a helical segment; the sequence is ICSVFVLVSGGGVLSHLVVFP.

It is found in the membrane. The chain is Protein npp-24 from Caenorhabditis elegans.